The sequence spans 122 residues: Putative TLX1 neighbor protein (122 aa).

The disordered stretch occupies residues 21–122; that stretch reads SLLSQEAMGP…LGGGRGQRGQ (102 aa). Over residues 113–122 the composition is skewed to gly residues; sequence LGGGRGQRGQ.

The chain is Putative TLX1 neighbor protein (TLX1NB) from Homo sapiens (Human).